The sequence spans 101 residues: MSKVIDQRRLADLIIKPIVTEKATLQLEDNKYVFDVRPEATKPEIKAAIELLFDVKVTGVNTARMPRRKKRVGRFMGFKAQVKRAVVTLKEGDSIQLFPDV.

The protein belongs to the universal ribosomal protein uL23 family. In terms of assembly, part of the 50S ribosomal subunit. Contacts protein L29, and trigger factor when it is bound to the ribosome.

One of the early assembly proteins it binds 23S rRNA. One of the proteins that surrounds the polypeptide exit tunnel on the outside of the ribosome. Forms the main docking site for trigger factor binding to the ribosome. This Synechocystis sp. (strain ATCC 27184 / PCC 6803 / Kazusa) protein is Large ribosomal subunit protein uL23.